The primary structure comprises 591 residues: Oligopeptide-binding protein OppA (591 aa).

Belongs to the bacterial solute-binding protein 5 family. As to quaternary structure, the complex is composed of an ATP-binding protein (OppD), two transmembrane proteins (OppB and OppC) and a solute-binding protein (OppA).

The protein localises to the periplasm. Functionally, part of the ABC transporter complex OppABCD involved in the uptake of oligopeptides. Peptide-binding protein that shows broad specificity but a moderate preference for hydrophobic oligopeptides and those that are 6-16 amino acids long. This chain is Oligopeptide-binding protein OppA, found in Mycobacterium bovis (strain ATCC BAA-935 / AF2122/97).